The following is a 356-amino-acid chain: Leucoanthocyanidin dioxygenase (356 aa).

Substrate is bound by residues tyrosine 142 and lysine 213. A Fe2OG dioxygenase domain is found at 208–307; that stretch reads LLLQMKINYY…RISWAVFCEP (100 aa). Position 215-217 (215-217) interacts with 2-oxoglutarate; sequence NYY. Histidine 232 contacts Fe cation. Threonine 233 contacts substrate. Aspartate 234 and histidine 288 together coordinate Fe cation. 298 to 300 contacts 2-oxoglutarate; sequence RIS. Positions 306 and 341 each coordinate substrate.

It belongs to the iron/ascorbate-dependent oxidoreductase family. L-ascorbate serves as cofactor. Requires Fe(2+) as cofactor. As to expression, expressed in young seedlings (at protein level).

It carries out the reaction a (2R,3S,4S)-leucoanthocyanidin + 2-oxoglutarate + O2 = a 4-H-anthocyanidin with a 3-hydroxy group + succinate + CO2 + 2 H2O. It catalyses the reaction (2R,3S,4S)-3,4-leucopelargonidin + 2-oxoglutarate + O2 = (4S)-2,3-dehydroleucopelargonidin + succinate + CO2 + H2O + H(+). The catalysed reaction is (2R,3S,4S)-leucocyanidin + 2-oxoglutarate + O2 = (4S)-2,3-dehydroleucocyanidin + succinate + CO2 + H2O + H(+). It functions in the pathway pigment biosynthesis; anthocyanin biosynthesis. Its function is as follows. Involved in anthocyanin and protoanthocyanidin biosynthesis by catalyzing the oxidation of leucoanthocyanidins into anthocyanidins. Possesses low flavonol synthase activity in vitro towards dihydrokaempferol and dihydroquercetin producing kaempferol and quercitin, respectively. The protein is Leucoanthocyanidin dioxygenase (LDOX) of Arabidopsis thaliana (Mouse-ear cress).